A 621-amino-acid chain; its full sequence is Pre-mRNA-processing protein 45 (621 aa).

Disordered regions lie at residues 1 to 73, 137 to 164, 220 to 251, 347 to 438, and 542 to 621; these read MSAT…YANG, SQRT…SNTE, AQRD…RSPP, RARE…ELRM, and GKND…EHDS. A compositionally biased stretch (low complexity) spans 36–51; that stretch reads PSTSSSSSALVSTSSP. 2 stretches are compositionally biased toward basic and acidic residues: residues 140-164 and 220-229; these read TDIK…SNTE and AQRDPLEPPR. Pro residues predominate over residues 239–248; the sequence is PPSPPPPVLR. Over residues 364 to 380 the composition is skewed to basic and acidic residues; sequence GRDDDVASRLADSDARP. The segment covering 403–417 has biased composition (acidic residues); sequence DSDESAASDEEDDEG. Basic and acidic residues-rich tracts occupy residues 418-437 and 594-621; these read ARER…RELR and EDAK…EHDS.

This sequence belongs to the SNW family. In terms of assembly, associated with the spliceosome.

It is found in the nucleus. Involved in pre-mRNA splicing. The protein is Pre-mRNA-processing protein 45 (PRP45) of Mycosarcoma maydis (Corn smut fungus).